We begin with the raw amino-acid sequence, 28 residues long: Cytochrome b6-f complex subunit 6 (28 aa).

The chain crosses the membrane as a helical span at residues 2–22; that stretch reads VEYLVILSGMFGLALACFFGL.

The protein belongs to the PetL family. In terms of assembly, the 4 large subunits of the cytochrome b6-f complex are cytochrome b6, subunit IV (17 kDa polypeptide, PetD), cytochrome f and the Rieske protein, while the 4 small subunits are PetG, PetL, PetM and PetN. The complex functions as a dimer.

It is found in the plastid. The protein localises to the cyanelle thylakoid membrane. Its function is as follows. Component of the cytochrome b6-f complex, which mediates electron transfer between photosystem II (PSII) and photosystem I (PSI), cyclic electron flow around PSI, and state transitions. PetL is important for photoautotrophic growth as well as for electron transfer efficiency and stability of the cytochrome b6-f complex. The polypeptide is Cytochrome b6-f complex subunit 6 (Cyanophora paradoxa).